A 91-amino-acid polypeptide reads, in one-letter code: NADH-ubiquinone oxidoreductase chain 4L (91 aa).

A run of 3 helical transmembrane segments spans residues 8–28 (LYFI…MILL), 38–58 (LLML…VFLI), and 59–79 (SIVC…FFYG).

This sequence belongs to the complex I subunit 4L family.

It localises to the mitochondrion membrane. The catalysed reaction is a ubiquinone + NADH + 5 H(+)(in) = a ubiquinol + NAD(+) + 4 H(+)(out). Its function is as follows. Core subunit of the mitochondrial membrane respiratory chain NADH dehydrogenase (Complex I) that is believed to belong to the minimal assembly required for catalysis. Complex I functions in the transfer of electrons from NADH to the respiratory chain. The immediate electron acceptor for the enzyme is believed to be ubiquinone. The polypeptide is NADH-ubiquinone oxidoreductase chain 4L (ND4L) (Rhipicephalus sanguineus (Brown dog tick)).